Reading from the N-terminus, the 586-residue chain is Regulatory protein NPR3 (586 aa).

Serine 10 carries the phosphoserine modification. The region spanning 60–135 (SDAEIIVDGV…IYTGRLKPFP (76 aa)) is the BTB domain. The C2HC NPR-type zinc-finger motif lies at 138 to 152 (VSTCVDPVCSHDCCR). Zn(2+)-binding residues include cysteine 141, cysteine 146, histidine 148, and cysteine 151. ANK repeat units lie at residues 261–291 (ERIG…TLDQ), 293–320 (NGLH…DVNY), and 324–353 (RGYT…NASE). The interval 383–523 (ESSKARLCID…MAEYIDDDIL (141 aa)) is salicylic acid-binding core (SBC). Arginine 428 contributes to the salicylate binding site. The tract at residues 554-586 (YSKDKESKIARSCLSASSSPSSSSIRDDLHNTT) is disordered. A compositionally biased stretch (low complexity) spans 565-577 (SCLSASSSPSSSS).

The protein belongs to the plant 'ANKYRIN-BTB/POZ' family. 'NPR1-like' subfamily. In terms of assembly, forms homodimers and heterodimers with NPR4 in the presence of salicylic acid (SA). Interacts with TGA2, TGA3, TGA5 and TGA6. Interacts with CUL3A, a core component of the cullin-RING ubiquitin ligases (CRL). Interacts with TGA2 in vivo in the nucleus. Binds to NPR1; this interaction is promoted by association with SA, probably due to conformational changes.

The protein resides in the nucleus. It participates in protein modification; protein ubiquitination. In terms of biological role, salicylic acid (SA)-binding substrate-specific adapter of an E3 ubiquitin-protein ligase complex (CUL3-RBX1-BTB) which mediates the ubiquitination and subsequent proteasomal degradation of NPR1 in response to SA. Together with NPR4, acts as receptor of salicylic acid to monitor immunity in a NPR1-dependent manner and induce systemic acquired resistance (SAR). Involved in the regulation of basal defense responses against pathogens, and may be implicated in the cross-talk between the SA- and JA-dependent signaling pathways. The sequence is that of Regulatory protein NPR3 from Arabidopsis thaliana (Mouse-ear cress).